Here is a 124-residue protein sequence, read N- to C-terminus: Orexigenic neuropeptide QRFP (124 aa).

A signal peptide spans 1–17; that stretch reads MRCLCSWLCLLLPLSAC. The propeptide occupies 18 to 79; sequence FPLLDRRGPT…REHTGFRLGR (62 aa). Positions 63–100 are disordered; sequence KEQQASRREHTGFRLGRQDSGSEATGFLPTDSEKASGP. Residue Gln-80 is modified to Pyrrolidone carboxylic acid. Phe-122 is subject to Phenylalanine amide.

It belongs to the RFamide neuropeptide family. In terms of assembly, ligand for the G-protein coupled receptor QRFPR/GPR103. Expressed in the brain with highest expression levels in the hypothalamus and optic nerve. Also expressed in the trachea and mammary gland.

The protein resides in the secreted. Its function is as follows. Stimulates feeding and grooming behavior, metabolic rate and locomotor activity and increases blood pressure. May have orexigenic activity. May promote aldosterone secretion by the adrenal gland. The protein is Orexigenic neuropeptide QRFP (Qrfp) of Rattus norvegicus (Rat).